We begin with the raw amino-acid sequence, 453 residues long: Phosphoglucosamine mutase (453 aa).

The active-site Phosphoserine intermediate is the serine 110. Positions 110, 247, 249, and 251 each coordinate Mg(2+). Serine 110 carries the post-translational modification Phosphoserine.

The protein belongs to the phosphohexose mutase family. The cofactor is Mg(2+). Post-translationally, activated by phosphorylation.

The enzyme catalyses alpha-D-glucosamine 1-phosphate = D-glucosamine 6-phosphate. Catalyzes the conversion of glucosamine-6-phosphate to glucosamine-1-phosphate. This Tropheryma whipplei (strain TW08/27) (Whipple's bacillus) protein is Phosphoglucosamine mutase.